Consider the following 256-residue polypeptide: Ciliary microtubule associated protein 1A (256 aa).

STPGR repeat units follow at residues 66–92 (PGPG…IYGR), 181–206 (PGPG…MTAR), and 217–242 (PGPG…FGIR). The segment at 91–115 (GRPRDISSFRTPGPGSYSPERAGKS) is disordered.

This sequence belongs to the CIMAP family.

Its subcellular location is the cytoplasm. It localises to the cytoskeleton. It is found in the flagellum axoneme. Functionally, outer dense fibers are filamentous structures located on the outside of the axoneme in the midpiece and principal piece of the mammalian sperm tail. May help to maintain the passive elastic structures and elastic recoil of the sperm tail. The protein is Ciliary microtubule associated protein 1A (cimap1a) of Xenopus laevis (African clawed frog).